Consider the following 226-residue polypeptide: Ribonuclease HII (226 aa).

Positions 24–216 (QRLCGVDEAG…VRKVLERGMV (193 aa)) constitute an RNase H type-2 domain. 3 residues coordinate a divalent metal cation: D30, E31, and D125.

Belongs to the RNase HII family. The cofactor is Mn(2+). It depends on Mg(2+) as a cofactor.

It is found in the cytoplasm. The catalysed reaction is Endonucleolytic cleavage to 5'-phosphomonoester.. Endonuclease that specifically degrades the RNA of RNA-DNA hybrids. In Cupriavidus metallidurans (strain ATCC 43123 / DSM 2839 / NBRC 102507 / CH34) (Ralstonia metallidurans), this protein is Ribonuclease HII.